Consider the following 45-residue polypeptide: Photosystem II reaction center protein K (45 aa).

The propeptide occupies Met1 to Ala8. Residues Leu24–Phe44 form a helical membrane-spanning segment.

This sequence belongs to the PsbK family. PSII is composed of 1 copy each of membrane proteins PsbA, PsbB, PsbC, PsbD, PsbE, PsbF, PsbH, PsbI, PsbJ, PsbK, PsbL, PsbM, PsbT, PsbX, PsbY, PsbZ, Psb30/Ycf12, peripheral proteins PsbO, CyanoQ (PsbQ), PsbU, PsbV and a large number of cofactors. It forms dimeric complexes.

It localises to the cellular thylakoid membrane. In terms of biological role, one of the components of the core complex of photosystem II (PSII). PSII is a light-driven water:plastoquinone oxidoreductase that uses light energy to abstract electrons from H(2)O, generating O(2) and a proton gradient subsequently used for ATP formation. It consists of a core antenna complex that captures photons, and an electron transfer chain that converts photonic excitation into a charge separation. This is Photosystem II reaction center protein K from Synechococcus elongatus (strain ATCC 33912 / PCC 7942 / FACHB-805) (Anacystis nidulans R2).